The chain runs to 133 residues: Phosphoribosyl-AMP cyclohydrolase (133 aa).

Asp-90 is a Mg(2+) binding site. Cys-91 contributes to the Zn(2+) binding site. Positions 92 and 94 each coordinate Mg(2+). Zn(2+) contacts are provided by Cys-107 and Cys-114.

Belongs to the PRA-CH family. Homodimer. Mg(2+) serves as cofactor. It depends on Zn(2+) as a cofactor.

The protein resides in the cytoplasm. It catalyses the reaction 1-(5-phospho-beta-D-ribosyl)-5'-AMP + H2O = 1-(5-phospho-beta-D-ribosyl)-5-[(5-phospho-beta-D-ribosylamino)methylideneamino]imidazole-4-carboxamide. The protein operates within amino-acid biosynthesis; L-histidine biosynthesis; L-histidine from 5-phospho-alpha-D-ribose 1-diphosphate: step 3/9. Its function is as follows. Catalyzes the hydrolysis of the adenine ring of phosphoribosyl-AMP. The polypeptide is Phosphoribosyl-AMP cyclohydrolase (Streptomyces avermitilis (strain ATCC 31267 / DSM 46492 / JCM 5070 / NBRC 14893 / NCIMB 12804 / NRRL 8165 / MA-4680)).